Reading from the N-terminus, the 160-residue chain is MIP18 family protein F45G2.10 (160 aa).

Positions 1 to 32 (MGQERLDNANPTLFDSKPRHRPVTGTERDESV) are disordered.

Belongs to the MIP18 family.

Its function is as follows. May play a role in chromosome segregation through establishment of sister chromatid cohesion. The chain is MIP18 family protein F45G2.10 from Caenorhabditis elegans.